Reading from the N-terminus, the 179-residue chain is Ribosomal-protein-serine acetyltransferase (179 aa).

Residues 11–172 form the N-acetyltransferase domain; it reads LELHAVAENH…NDAYDDVNLY (162 aa).

Belongs to the acetyltransferase family. RimL subfamily.

The protein resides in the cytoplasm. It catalyses the reaction N-terminal L-seryl-[ribosomal protein bL12] + acetyl-CoA = N-terminal N(alpha)-acetyl-L-seryl-[ribosomal protein bL12] + CoA + H(+). In terms of biological role, this enzyme acetylates the N-terminal serine of ribosomal protein bL12, converting it into the acetylated form of bL12 known as bL7. The sequence is that of Ribosomal-protein-serine acetyltransferase from Escherichia coli (strain K12).